Consider the following 265-residue polypeptide: 4-hydroxy-tetrahydrodipicolinate reductase (265 aa).

Residues G7–M12 and D33 contribute to the NAD(+) site. R34 contributes to the NADP(+) binding site. NAD(+) contacts are provided by residues G96 to T98 and A120 to M123. H153 (proton donor/acceptor) is an active-site residue. A (S)-2,3,4,5-tetrahydrodipicolinate-binding site is contributed by H154. The active-site Proton donor is the K157. G163–T164 contacts (S)-2,3,4,5-tetrahydrodipicolinate.

It belongs to the DapB family.

The protein resides in the cytoplasm. It carries out the reaction (S)-2,3,4,5-tetrahydrodipicolinate + NAD(+) + H2O = (2S,4S)-4-hydroxy-2,3,4,5-tetrahydrodipicolinate + NADH + H(+). The catalysed reaction is (S)-2,3,4,5-tetrahydrodipicolinate + NADP(+) + H2O = (2S,4S)-4-hydroxy-2,3,4,5-tetrahydrodipicolinate + NADPH + H(+). Its pathway is amino-acid biosynthesis; L-lysine biosynthesis via DAP pathway; (S)-tetrahydrodipicolinate from L-aspartate: step 4/4. Catalyzes the conversion of 4-hydroxy-tetrahydrodipicolinate (HTPA) to tetrahydrodipicolinate. The chain is 4-hydroxy-tetrahydrodipicolinate reductase from Burkholderia orbicola (strain AU 1054).